Here is a 137-residue protein sequence, read N- to C-terminus: MAKQAKAGAARRPQRGRRRERKNVPRGQAHVQATFNNTIVTITDPAGNVVCWSSAGASGFKGSRKSTPYAAQVTAEQAARKAMDNGMRVVEVYVKGPGAGRESAVRALQATGLSVIAITDVTPIPHNGCRPPKRRRV.

Residues 1–11 show a composition bias toward low complexity; the sequence is MAKQAKAGAAR. Residues 1-32 are disordered; that stretch reads MAKQAKAGAARRPQRGRRRERKNVPRGQAHVQ. Residues 12 to 21 are compositionally biased toward basic residues; the sequence is RPQRGRRRER.

Belongs to the universal ribosomal protein uS11 family. Part of the 30S ribosomal subunit. Interacts with proteins S7 and S18. Binds to IF-3.

In terms of biological role, located on the platform of the 30S subunit, it bridges several disparate RNA helices of the 16S rRNA. Forms part of the Shine-Dalgarno cleft in the 70S ribosome. The chain is Small ribosomal subunit protein uS11 from Herpetosiphon aurantiacus (strain ATCC 23779 / DSM 785 / 114-95).